We begin with the raw amino-acid sequence, 228 residues long: DNA-3-methyladenine glycosylase 1 (228 aa).

Aspartate 170 serves as the catalytic Proton acceptor.

It belongs to the alkylbase DNA glycosidase AlkA family.

It catalyses the reaction Hydrolysis of alkylated DNA, releasing 3-methyladenine, 3-methylguanine, 7-methylguanine and 7-methyladenine.. Functionally, hydrolysis of the deoxyribose N-glycosidic bond to excise 3-methyladenine or 7-methyladenine from the damaged DNA polymer formed by alkylation lesions. Can release ethylated and propylated bases from DNA in addition to 3-methyladenine. The chain is DNA-3-methyladenine glycosylase 1 (mag1) from Schizosaccharomyces pombe (strain 972 / ATCC 24843) (Fission yeast).